The following is a 412-amino-acid chain: DNA utilization protein HofQ (412 aa).

Residues 1–18 (MKQWIAALLLMLIPGVQA) form the signal peptide.

It belongs to the bacterial secretin family. PilQ subfamily.

Its subcellular location is the cell outer membrane. Its function is as follows. Required for the use of extracellular DNA as a nutrient. Could be the porin responsible for transport of DNA across the outer membrane. In Escherichia coli (strain K12), this protein is DNA utilization protein HofQ (hofQ).